Consider the following 194-residue polypeptide: ATP-dependent Clp protease proteolytic subunit (194 aa).

Serine 97 (nucleophile) is an active-site residue. Histidine 122 is an active-site residue.

It belongs to the peptidase S14 family. Fourteen ClpP subunits assemble into 2 heptameric rings which stack back to back to give a disk-like structure with a central cavity, resembling the structure of eukaryotic proteasomes.

It is found in the cytoplasm. The catalysed reaction is Hydrolysis of proteins to small peptides in the presence of ATP and magnesium. alpha-casein is the usual test substrate. In the absence of ATP, only oligopeptides shorter than five residues are hydrolyzed (such as succinyl-Leu-Tyr-|-NHMec, and Leu-Tyr-Leu-|-Tyr-Trp, in which cleavage of the -Tyr-|-Leu- and -Tyr-|-Trp bonds also occurs).. Functionally, cleaves peptides in various proteins in a process that requires ATP hydrolysis. Has a chymotrypsin-like activity. Plays a major role in the degradation of misfolded proteins. The polypeptide is ATP-dependent Clp protease proteolytic subunit (Campylobacter jejuni subsp. jejuni serotype O:23/36 (strain 81-176)).